A 269-amino-acid polypeptide reads, in one-letter code: Shikimate dehydrogenase (NADP(+)) (269 aa).

Shikimate is bound by residues 22-24 (TLS) and Thr-68. The Proton acceptor role is filled by Lys-72. 2 residues coordinate shikimate: Asn-93 and Asp-104. Residues 128–132 (GAGGA), 152–157 (NRTNLR), and Phe-210 each bind NADP(+). Tyr-212 contributes to the shikimate binding site. Gly-233 is a binding site for NADP(+).

This sequence belongs to the shikimate dehydrogenase family. In terms of assembly, homodimer.

It carries out the reaction shikimate + NADP(+) = 3-dehydroshikimate + NADPH + H(+). The protein operates within metabolic intermediate biosynthesis; chorismate biosynthesis; chorismate from D-erythrose 4-phosphate and phosphoenolpyruvate: step 4/7. Its function is as follows. Involved in the biosynthesis of the chorismate, which leads to the biosynthesis of aromatic amino acids. Catalyzes the reversible NADPH linked reduction of 3-dehydroshikimate (DHSA) to yield shikimate (SA). This is Shikimate dehydrogenase (NADP(+)) from Saccharolobus islandicus (strain L.S.2.15 / Lassen #1) (Sulfolobus islandicus).